The chain runs to 156 residues: Small ribosomal subunit protein uS7 (156 aa).

Belongs to the universal ribosomal protein uS7 family. Part of the 30S ribosomal subunit. Contacts proteins S9 and S11.

In terms of biological role, one of the primary rRNA binding proteins, it binds directly to 16S rRNA where it nucleates assembly of the head domain of the 30S subunit. Is located at the subunit interface close to the decoding center, probably blocks exit of the E-site tRNA. The chain is Small ribosomal subunit protein uS7 from Maricaulis maris (strain MCS10) (Caulobacter maris).